The following is a 154-amino-acid chain: Superoxide dismutase [Cu-Zn] (154 aa).

His-47, His-49, and His-64 together coordinate Cu cation. A disulfide bridge connects residues Cys-58 and Cys-147. Zn(2+)-binding residues include His-64, His-72, His-81, and Asp-84. His-121 serves as a coordination point for Cu cation. Over residues 126–137 (DLGRGGNEESKK) the composition is skewed to basic and acidic residues. Residues 126-147 (DLGRGGNEESKKTGNAGPRPAC) are disordered.

It belongs to the Cu-Zn superoxide dismutase family. As to quaternary structure, homodimer. Cu cation is required as a cofactor. Zn(2+) serves as cofactor.

It localises to the cytoplasm. The catalysed reaction is 2 superoxide + 2 H(+) = H2O2 + O2. In terms of biological role, destroys radicals which are normally produced within the cells and which are toxic to biological systems. Plays an important role in the phase transition, and may be important in vivo, as it would facilitate the intracellular survival of the fungus by providing a non-toxic environment in the macrophage phagolysosomes. The chain is Superoxide dismutase [Cu-Zn] from Talaromyces marneffei (Penicillium marneffei).